The sequence spans 225 residues: MTIPSFAIGIAGGTGAGKTTVAREITDNVGESATLIPLDNYYEDLSDRPFEERANANYDHPSAFEWELLRTHIDALLSGQSIEMPQYDFERHVRKADRVVVEPTDVIVLEGILALSDETVNDMLDLHIYVETDADVRILRRIERDVVERGRELEGVMDQYLSTVKPMHEQFIEPTKRHADIIIPEGANSVAVNLLEEKVQAETSEMTAWAARDDTAFEDATYNPQ.

ATP is bound at residue 12–19 (GGTGAGKT).

The protein belongs to the uridine kinase family.

It localises to the cytoplasm. It catalyses the reaction uridine + ATP = UMP + ADP + H(+). It carries out the reaction cytidine + ATP = CMP + ADP + H(+). It functions in the pathway pyrimidine metabolism; CTP biosynthesis via salvage pathway; CTP from cytidine: step 1/3. Its pathway is pyrimidine metabolism; UMP biosynthesis via salvage pathway; UMP from uridine: step 1/1. This chain is Uridine kinase, found in Halobacterium salinarum (strain ATCC 700922 / JCM 11081 / NRC-1) (Halobacterium halobium).